The following is a 192-amino-acid chain: uncharacterized protein (192 aa).

One can recognise a Nudix hydrolase domain in the interval 29–160 (RRQAAVLIPL…PLDIQRRGHD (132 aa)). The Nudix box motif lies at 67 to 89 (GAVDSTDASLIAAALREAHEEVA). Residues Glu83 and Glu87 each contribute to the Mg(2+) site.

It belongs to the Nudix hydrolase family. PCD1 subfamily. Mn(2+) is required as a cofactor. It depends on Mg(2+) as a cofactor.

In terms of biological role, probably mediates the hydrolysis of some nucleoside diphosphate derivatives. This is an uncharacterized protein from Enterobacter sp. (strain 638).